A 351-amino-acid polypeptide reads, in one-letter code: MNLVSLQNWLDNASFAVLFLTMLLYWIGAAFPGLPAINALGTAGMAIANLSIATLLGARWIEAGYFPLSNLYESLFFLSWGITTVHLIAENSSRSRLVGVFTTPVAMGIVAFATLTLPSDMQVSEPLVPALKSNWLMMHVSVMMLSYSALMVGSLLAIAFLVITRGNNIQLQGSSVGNGGYRTNGYRLMKAGELVSQPATPPVENNGFARLESQNNGNGNTAVLNLATTPQATTLTPTETLSPQRLSLAETLDNISYRIIGLGFPLLTIGIIAGAVWANEAWGSYWSWDPKETWALITWLVFAAYLHARITRGWQGRRPAILAASGFVVVWICYLGVNLLGKGLHSYGWFF.

The next 8 membrane-spanning stretches (helical) occupy residues 17-37 (VLFL…LPAI), 38-58 (NALG…LLGA), 68-88 (LSNL…VHLI), 97-117 (LVGV…TLTL), 143-163 (MMLS…FLVI), 259-279 (IIGL…VWAN), 286-306 (WSWD…AAYL), and 320-340 (AILA…VNLL).

This sequence belongs to the CcmF/CycK/Ccl1/NrfE/CcsA family. In terms of assembly, may interact with ccs1.

It localises to the cellular thylakoid membrane. Required during biogenesis of c-type cytochromes (cytochrome c6 and cytochrome f) at the step of heme attachment. The polypeptide is Cytochrome c biogenesis protein CcsA (Trichormus variabilis (strain ATCC 29413 / PCC 7937) (Anabaena variabilis)).